The following is a 90-amino-acid chain: uncharacterized protein (90 aa).

The helical transmembrane segment at 32 to 52 threads the bilayer; sequence IIINLIPLVLLFAFFCPCIYF.

Its subcellular location is the membrane. This is an uncharacterized protein from Schizosaccharomyces pombe (strain 972 / ATCC 24843) (Fission yeast).